Consider the following 316-residue polypeptide: Acetyl-coenzyme A carboxylase carboxyl transferase subunit alpha (316 aa).

Residues 40–290 (KARKELQRIY…RERFAHHLQE (251 aa)) form the CoA carboxyltransferase C-terminal domain.

This sequence belongs to the AccA family. In terms of assembly, acetyl-CoA carboxylase is a heterohexamer composed of biotin carboxyl carrier protein (AccB), biotin carboxylase (AccC) and two subunits each of ACCase subunit alpha (AccA) and ACCase subunit beta (AccD).

Its subcellular location is the cytoplasm. It catalyses the reaction N(6)-carboxybiotinyl-L-lysyl-[protein] + acetyl-CoA = N(6)-biotinyl-L-lysyl-[protein] + malonyl-CoA. Its pathway is lipid metabolism; malonyl-CoA biosynthesis; malonyl-CoA from acetyl-CoA: step 1/1. Component of the acetyl coenzyme A carboxylase (ACC) complex. First, biotin carboxylase catalyzes the carboxylation of biotin on its carrier protein (BCCP) and then the CO(2) group is transferred by the carboxyltransferase to acetyl-CoA to form malonyl-CoA. This Acidithiobacillus ferrooxidans (strain ATCC 23270 / DSM 14882 / CIP 104768 / NCIMB 8455) (Ferrobacillus ferrooxidans (strain ATCC 23270)) protein is Acetyl-coenzyme A carboxylase carboxyl transferase subunit alpha.